The sequence spans 328 residues: Formimidoylglutamase (328 aa).

Positions 133, 159, 161, 163, 253, and 255 each coordinate Mn(2+).

The protein belongs to the arginase family. The cofactor is Mn(2+).

The enzyme catalyses N-formimidoyl-L-glutamate + H2O = formamide + L-glutamate. It participates in amino-acid degradation; L-histidine degradation into L-glutamate; L-glutamate from N-formimidoyl-L-glutamate (hydrolase route): step 1/1. Its function is as follows. Catalyzes the conversion of N-formimidoyl-L-glutamate to L-glutamate and formamide. This is Formimidoylglutamase from Streptococcus pyogenes serotype M18 (strain MGAS8232).